Reading from the N-terminus, the 126-residue chain is RuBisCO chaperone RbcX (126 aa).

It belongs to the RbcX family. Homodimer. Interacts with the exposed C-terminal peptide of RbcL via its central cleft, contacts a second RbcL monomer via its peripheral polar surface.

The protein localises to the carboxysome. Its subcellular location is the cytoplasm. Its function is as follows. An RbcL-specific chaperone. Required for assembly of the RbcL8 core. The central cleft of the RbcX homodimer (RbcX2) binds the C-terminus of a RbcL monomer, stabilizing the C-terminus and probably preventing its reassociation with chaperonin GroEL-ES. At the same time the peripheral region of RbcX2 binds a second RbcL monomer, bridging the RbcL homodimers in the correct orientation. The RbcX2(2)-bound RbcL dimers then assemble into the RbcL8 core (RbcL8-(RbcX2)8). RbcS binding triggers the release of RbcX2. The polypeptide is RuBisCO chaperone RbcX (Thermosynechococcus vestitus (strain NIES-2133 / IAM M-273 / BP-1)).